We begin with the raw amino-acid sequence, 692 residues long: Elongation factor G (692 aa).

A tr-type G domain is found at Glu8–Thr283. GTP is bound by residues Ala17–Thr24, Asp81–His85, and Asn135–Asp138.

It belongs to the TRAFAC class translation factor GTPase superfamily. Classic translation factor GTPase family. EF-G/EF-2 subfamily.

It localises to the cytoplasm. Functionally, catalyzes the GTP-dependent ribosomal translocation step during translation elongation. During this step, the ribosome changes from the pre-translocational (PRE) to the post-translocational (POST) state as the newly formed A-site-bound peptidyl-tRNA and P-site-bound deacylated tRNA move to the P and E sites, respectively. Catalyzes the coordinated movement of the two tRNA molecules, the mRNA and conformational changes in the ribosome. This is Elongation factor G from Nitratiruptor sp. (strain SB155-2).